Consider the following 146-residue polypeptide: Large ribosomal subunit protein uL15 (146 aa).

Basic and acidic residues predominate over residues 1–13 (MKLNELHPSEGSR). Residues 1-56 (MKLNELHPSEGSRHARKRVGRGTSSGFGKTSGRGQKGQHARSGGNTRLGFEGGQMP) form a disordered region. Positions 23 to 35 (TSSGFGKTSGRGQ) are enriched in gly residues.

It belongs to the universal ribosomal protein uL15 family. Part of the 50S ribosomal subunit.

Functionally, binds to the 23S rRNA. This Lactobacillus delbrueckii subsp. bulgaricus (strain ATCC 11842 / DSM 20081 / BCRC 10696 / JCM 1002 / NBRC 13953 / NCIMB 11778 / NCTC 12712 / WDCM 00102 / Lb 14) protein is Large ribosomal subunit protein uL15.